The following is a 419-amino-acid chain: Protein phosphatase methylesterase 1 (419 aa).

Residues 1 to 12 (MSQLHRGMHKKP) are compositionally biased toward basic residues. The disordered stretch occupies residues 1-75 (MSQLHRGMHK…KSAASPTVPA (75 aa)). Residues 32 to 52 (TETEETVECTEEEEEQDETDG) show a composition bias toward acidic residues. Catalysis depends on residues S230, D256, and H383.

Belongs to the AB hydrolase superfamily.

It catalyses the reaction [phosphatase 2A protein]-C-terminal L-leucine methyl ester + H2O = [phosphatase 2A protein]-C-terminal L-leucine + methanol + H(+). In terms of biological role, demethylates proteins that have been reversibly carboxymethylated. Demethylates the phosphatase PP2A catalytic subunit. The polypeptide is Protein phosphatase methylesterase 1 (PPE1) (Yarrowia lipolytica (strain CLIB 122 / E 150) (Yeast)).